Reading from the N-terminus, the 658-residue chain is Threonine--tRNA ligase (658 aa).

A TGS domain is found at 1 to 63 (MDQITITFPD…DDNASIDFVA (63 aa)). The catalytic stretch occupies residues 245 to 548 (DHRKLGRELD…LIEHYAGNFP (304 aa)). Residues Cys-341, His-392, and His-525 each contribute to the Zn(2+) site.

Belongs to the class-II aminoacyl-tRNA synthetase family. In terms of assembly, homodimer. The cofactor is Zn(2+).

The protein resides in the cytoplasm. It catalyses the reaction tRNA(Thr) + L-threonine + ATP = L-threonyl-tRNA(Thr) + AMP + diphosphate + H(+). Its function is as follows. Catalyzes the attachment of threonine to tRNA(Thr) in a two-step reaction: L-threonine is first activated by ATP to form Thr-AMP and then transferred to the acceptor end of tRNA(Thr). Also edits incorrectly charged L-seryl-tRNA(Thr). The sequence is that of Threonine--tRNA ligase from Rhodopseudomonas palustris (strain ATCC BAA-98 / CGA009).